A 313-amino-acid chain; its full sequence is MGNEFQHRTVLLDEAVDALVTRPDGVYVDGTFGRGGHSRAVLARLGDAGRLIAFDKDPRAIETAESIEDARFEIVHDSFAAMKGALDARGVGRVSGVLLDLGVSSPQVDDPARGFSFRANGPLDMRMDPTRGESAAEWLARASVQELTEVIRDYGEERFAFQIAKAIVARRAESDRLGPLDSTGELAQIVGHVVKTREKGKDPATRTFQAIRIHVNQELADLQVVLEAALSLLEQGGRLVVISFHSLEDRIVKRFLQAHASAPAVDRRLPIRAADLPRPPLKLLGRMFPNDAEVAANPRARSAVMRIAERVAP.

S-adenosyl-L-methionine contacts are provided by residues 35–37 (GGH), D55, F79, D100, and Q107.

It belongs to the methyltransferase superfamily. RsmH family.

It localises to the cytoplasm. The catalysed reaction is cytidine(1402) in 16S rRNA + S-adenosyl-L-methionine = N(4)-methylcytidine(1402) in 16S rRNA + S-adenosyl-L-homocysteine + H(+). Specifically methylates the N4 position of cytidine in position 1402 (C1402) of 16S rRNA. This is Ribosomal RNA small subunit methyltransferase H from Burkholderia mallei (strain NCTC 10247).